We begin with the raw amino-acid sequence, 148 residues long: Glutamyl-tRNA(Gln) amidotransferase subunit C, mitochondrial (148 aa).

It belongs to the GatC family. In terms of assembly, subunit of the heterotrimeric GatCAB amidotransferase (AdT) complex, composed of A, B and C subunits.

The protein localises to the mitochondrion. It carries out the reaction L-glutamyl-tRNA(Gln) + L-glutamine + ATP + H2O = L-glutaminyl-tRNA(Gln) + L-glutamate + ADP + phosphate + H(+). In terms of biological role, allows the formation of correctly charged Gln-tRNA(Gln) through the transamidation of misacylated Glu-tRNA(Gln) in the mitochondria. The reaction takes place in the presence of glutamine and ATP through an activated gamma-phospho-Glu-tRNA(Gln). The polypeptide is Glutamyl-tRNA(Gln) amidotransferase subunit C, mitochondrial (Drosophila sechellia (Fruit fly)).